A 421-amino-acid polypeptide reads, in one-letter code: Phaseolin, beta-type (421 aa).

The signal sequence occupies residues 1–24 (MMRARVPLLLLGILFLASLSASFA). Residues 237-390 (KSLSKQDNTI…TFSGSGDEVM (154 aa)) form the Cupin type-1 domain. N-linked (GlcNAc...) asparagine glycans are attached at residues Asn-252 and Asn-341.

It belongs to the 7S seed storage protein family. In terms of assembly, homotrimer that associates to form a dodecamer.

It localises to the vacuole. The protein localises to the aleurone grain. Its function is as follows. Major seed storage protein. This chain is Phaseolin, beta-type, found in Phaseolus vulgaris (Kidney bean).